A 104-amino-acid chain; its full sequence is Large ribosomal subunit protein uL24 (104 aa).

Belongs to the universal ribosomal protein uL24 family. As to quaternary structure, part of the 50S ribosomal subunit.

Its function is as follows. One of two assembly initiator proteins, it binds directly to the 5'-end of the 23S rRNA, where it nucleates assembly of the 50S subunit. Functionally, one of the proteins that surrounds the polypeptide exit tunnel on the outside of the subunit. The protein is Large ribosomal subunit protein uL24 of Escherichia coli O81 (strain ED1a).